The chain runs to 357 residues: Elongation factor Ts (357 aa).

The involved in Mg(2+) ion dislocation from EF-Tu stretch occupies residues 82–85 (TDFV).

Belongs to the EF-Ts family.

Its subcellular location is the cytoplasm. Its function is as follows. Associates with the EF-Tu.GDP complex and induces the exchange of GDP to GTP. It remains bound to the aminoacyl-tRNA.EF-Tu.GTP complex up to the GTP hydrolysis stage on the ribosome. The sequence is that of Elongation factor Ts from Campylobacter jejuni (strain RM1221).